The sequence spans 50 residues: Large ribosomal subunit protein bL33 (50 aa).

This sequence belongs to the bacterial ribosomal protein bL33 family.

The polypeptide is Large ribosomal subunit protein bL33 (Citrifermentans bemidjiense (strain ATCC BAA-1014 / DSM 16622 / JCM 12645 / Bem) (Geobacter bemidjiensis)).